A 441-amino-acid chain; its full sequence is Zinc finger protein ZIC 3 (441 aa).

The C2H2-type 1; atypical zinc-finger motif lies at 222 to 257; that stretch reads LSCKWLEESTMNHPQKTCDRTFSSMHELVTHMTMEH. The segment at 266–293 adopts a C2H2-type 2; atypical zinc-finger fold; sequence HICYWEECPRGGKSFKAKYKLVNHIRVH. C2H2-type zinc fingers lie at residues 299 to 323, 329 to 353, and 359 to 381; these read FPCPFPGCGKIFARSENLKIHKRTH, FKCEFEGCDRRFANSSDRKKHMHVH, and YICKVCDKSYTHPSSLRKHMKVH. Residues 375–441 form a disordered region; it reads RKHMKVHESQ…LPPNFNEWYV (67 aa). Positions 383–399 are enriched in low complexity; it reads SQGSDSSPAASSGYESA. Polar residues predominate over residues 406-429; that stretch reads SANSEEPSKNSSATHQTNNNSHNT.

The protein belongs to the GLI C2H2-type zinc-finger protein family. First detected at early gastrula (stage 10.25) in the dorsal lip and prospective neural plate. Also expressed in the mesoderm at early gastrulation, with expression strongest on the dorsal side. Mesodermal expression continues at stage 12 but is hardly detectable after stage 14. As gastrulation proceeds, expression decreases in the dorsal lip and increases in the prospective neural plate. At the neural plate stage (stage 14), expressed strongly in the prospective mesencephalon and anterior rhombencephalon, after which expression becomes stronger in the anterior neural folds. At early tailbud stage (stage 20), expression becomes restricted to the dorsal region of forebrain, midbrain and hindbrain, and weakly to the dorsal trunk. After mid-tailbud stage, expression decreases in the diencephalon, appears in the lateral mesoderm of the tailbud region and becomes restricted in the dorsal part of the neural tube.

Its subcellular location is the nucleus. The protein resides in the cytoplasm. In terms of biological role, probably acts as a transcriptional activator. May bind to the minimal GLI-consensus sequence 5'-GGGTGGTC-3'. Can determine the ectodermal cell fate and promote the earliest step of neural and neural crest development. Involved in establishing left-right asymmetry in the embryo. This is Zinc finger protein ZIC 3 (zic3) from Xenopus laevis (African clawed frog).